The chain runs to 474 residues: Eukaryotic translation initiation factor 3 subunit L (474 aa).

In terms of domain architecture, PCI spans 255–449 (DAIRMFSHIL…DLDYALQGDL (195 aa)).

The protein belongs to the eIF-3 subunit L family. In terms of assembly, component of the eukaryotic translation initiation factor 3 (eIF-3) complex.

The protein resides in the cytoplasm. Its function is as follows. Component of the eukaryotic translation initiation factor 3 (eIF-3) complex, which is involved in protein synthesis of a specialized repertoire of mRNAs and, together with other initiation factors, stimulates binding of mRNA and methionyl-tRNAi to the 40S ribosome. The eIF-3 complex specifically targets and initiates translation of a subset of mRNAs involved in cell proliferation. This chain is Eukaryotic translation initiation factor 3 subunit L, found in Neurospora crassa (strain ATCC 24698 / 74-OR23-1A / CBS 708.71 / DSM 1257 / FGSC 987).